The chain runs to 1083 residues: Rho GTPase-activating protein 39 (1083 aa).

Ser-2 bears the N-acetylserine mark. 2 consecutive WW domains span residues 25–58 (NTRL…PPAG) and 63–97 (RTSE…RPQG). A disordered region spans residues 110-154 (KQNTESPRASAESSPGRGSSVSREGSTSSSLEPEPDTEKAQELPA). Low complexity predominate over residues 117 to 141 (RASAESSPGRGSSVSREGSTSSSLE). Phosphoserine is present on Ser-169. The interval 226–369 (AAQGNGYAPD…NKQGPPSPCQ (144 aa)) is disordered. The segment covering 245–256 (PSGSQHSPSLQT) has biased composition (polar residues). Positions 268–280 (PERRPSPFLKRAE) are enriched in basic and acidic residues. Residues Ser-286, Ser-384, Ser-388, Ser-406, and Ser-407 each carry the phosphoserine modification. Disordered regions lie at residues 405 to 545 (GSSP…EAEG) and 570 to 599 (MKQR…PGPV). Composition is skewed to polar residues over residues 474 to 488 (SWSS…TGYS) and 573 to 582 (RSSWDSQQDG). Ser-604, Ser-690, Ser-715, and Ser-726 each carry phosphoserine. The 158-residue stretch at 722 to 879 (WSSESIKKPM…PNVEEIRHAK (158 aa)) folds into the MyTH4 domain. Residues 890 to 1078 (SALQEVMGMQ…VLIQHLDTSF (189 aa)) form the Rho-GAP domain.

The protein resides in the nucleus. The sequence is that of Rho GTPase-activating protein 39 (ARHGAP39) from Homo sapiens (Human).